Here is a 348-residue protein sequence, read N- to C-terminus: Selenide, water dikinase (348 aa).

Sec17 is a catalytic residue. Position 17 (Sec17) is a non-standard amino acid, selenocysteine. ATP is bound by residues Lys20 and 48–50; that span reads TAD. Asp51 contacts Mg(2+). Residues Asp68, Asp91, and 138–140 contribute to the ATP site; that span reads GHT. A Mg(2+)-binding site is contributed by Asp91. Asp226 is a binding site for Mg(2+).

Belongs to the selenophosphate synthase 1 family. Class I subfamily. Homodimer. Mg(2+) serves as cofactor.

The catalysed reaction is hydrogenselenide + ATP + H2O = selenophosphate + AMP + phosphate + 2 H(+). In terms of biological role, synthesizes selenophosphate from selenide and ATP. The polypeptide is Selenide, water dikinase (Clostridioides difficile (strain 630) (Peptoclostridium difficile)).